A 719-amino-acid chain; its full sequence is Catalase-3 (719 aa).

Positions 1–18 (MRVNALLPLSGLIGTALA) are cleaved as a signal peptide. The propeptide occupies 19-30 (ACPFADPSALGR). Active-site residues include H102 and N175. Y389 contributes to the heme binding site.

It belongs to the catalase family. Heme serves as cofactor.

It catalyses the reaction 2 H2O2 = O2 + 2 H2O. In terms of biological role, occurs in almost all aerobically respiring organisms and serves to protect cells from the toxic effects of hydrogen peroxide. This chain is Catalase-3 (cat-3), found in Neurospora crassa (strain ATCC 24698 / 74-OR23-1A / CBS 708.71 / DSM 1257 / FGSC 987).